Reading from the N-terminus, the 216-residue chain is Cytosolic-abundant heat soluble protein 2 (216 aa).

Over residues 1 to 11 the composition is skewed to polar residues; the sequence is MSRDQGSTEYD. 2 disordered regions span residues 1–34 and 66–91; these read MSRD…DVRT and RISG…KDRE. Residues 12-22 are compositionally biased toward basic and acidic residues; it reads ANQRQEQHQEQ. 2 stretches are compositionally biased toward polar residues: residues 25–34 and 68–77; these read TSYTHTDVRT and SGQSSETHVQ. A coiled-coil region spans residues 81-180; it reads EMEAEARKDR…ARLATQALDQ (100 aa). 2 CAHS motif regions span residues 115–133 and 152–170; these read YRKQ…LEKQ and QKRQ…LDRE.

This sequence belongs to the Cytosolic-abundant heat soluble protein (CAHS) family.

The protein localises to the cytoplasm. Its function is as follows. CAHS proteins are cytosolic heat soluble proteins that seem to contribute to the anhydrobiosis in tardigrades, but their specific mechanisms are yet to be identified. It is possible that protection during anhydrobiosis might occur via the stabilization of vitrifying small molecules such as sugars, but not via the direct glass transition of CAHS proteins themselves. In Ramazzottius varieornatus (Water bear), this protein is Cytosolic-abundant heat soluble protein 2.